Here is a 111-residue protein sequence, read N- to C-terminus: MSKGFGPMGQFQEALKRVKQIQEGSAKLQDELAALSIEGVAGGGLVKVTLSGNQEPTGVTIDPQLLSESKEVVEDLLLTAYKDAYTKSAETMKAKMQELTGGMELPPGLGF.

Belongs to the YbaB/EbfC family. As to quaternary structure, homodimer.

The protein resides in the cytoplasm. It is found in the nucleoid. Functionally, binds to DNA and alters its conformation. May be involved in regulation of gene expression, nucleoid organization and DNA protection. This is Nucleoid-associated protein glr3498 from Gloeobacter violaceus (strain ATCC 29082 / PCC 7421).